The sequence spans 402 residues: Tol-Pal system protein TolB (402 aa).

The first 17 residues, 1–17, serve as a signal peptide directing secretion; that stretch reads MKKIVAIFLVFLGSLWA.

The protein belongs to the TolB family. In terms of assembly, the Tol-Pal system is composed of five core proteins: the inner membrane proteins TolA, TolQ and TolR, the periplasmic protein TolB and the outer membrane protein Pal. They form a network linking the inner and outer membranes and the peptidoglycan layer.

The protein localises to the periplasm. Part of the Tol-Pal system, which plays a role in outer membrane invagination during cell division and is important for maintaining outer membrane integrity. In Campylobacter jejuni (strain RM1221), this protein is Tol-Pal system protein TolB.